Consider the following 104-residue polypeptide: Large ribosomal subunit protein uL24 (104 aa).

It belongs to the universal ribosomal protein uL24 family. In terms of assembly, part of the 50S ribosomal subunit.

Functionally, one of two assembly initiator proteins, it binds directly to the 5'-end of the 23S rRNA, where it nucleates assembly of the 50S subunit. Its function is as follows. One of the proteins that surrounds the polypeptide exit tunnel on the outside of the subunit. The polypeptide is Large ribosomal subunit protein uL24 (Escherichia coli O81 (strain ED1a)).